A 326-amino-acid polypeptide reads, in one-letter code: MYGIEYTTTLTFLILLVLLNYILKSITRIMDYILYHFLLFIVIVTPFVNSQNYGINLPITGSMDTNYQNVSNPEPFLTSTLCLYYPVEAETEIADSSWKDTLSQLFLTKGWPTGSVYLKSYTDIATFSINPQLYCDYNIVLMKYNANSELDMSELADLILNEWLCNPMDIALYYYQQTDEANKWISMGDSCTIKVCPLNTQTLGIGCLTTDTTTFEEVATAEKLVITDVVDGVNYKINVTTTTCTIRNCKKLGPRENVAVIQVGGSNILDITADPTTAPQTERMMRINWKKWWQVFYTVVDYVNQIIQTMSKRSRSLDSASFYYRI.

An N-terminal signal peptide occupies residues 1 to 50 (MYGIEYTTTLTFLILLVLLNYILKSITRIMDYILYHFLLFIVIVTPFVNS). N-linked (GlcNAc...) asparagine; by host glycosylation is present at asparagine 69. 4 cysteine pairs are disulfide-bonded: cysteine 82/cysteine 135, cysteine 165/cysteine 249, cysteine 191/cysteine 244, and cysteine 196/cysteine 207. Aspartate 95 contributes to the Ca(2+) binding site. Residues 165–167 (CNP) are CNP motif; interaction with ITGAV/ITGB3. The Ca(2+) site is built by glutamine 177, glycine 206, threonine 214, glutamate 216, aspartate 228, valine 229, and aspartate 231. A glycan (N-linked (GlcNAc...) asparagine; by host) is linked at asparagine 238. The interval 253-255 (GPR) is GPR motif; interaction with ITGAX/ITGB2. Ca(2+) is bound at residue aspartate 301.

Belongs to the rotavirus VP7 family. As to quaternary structure, homotrimer; disulfide-linked. 2 Ca(2+) ions bound at each subunit interface in the trimer hold the trimer together. Interacts with the intermediate capsid protein VP6. Interacts with the outer capsid protein VP5*. In terms of processing, N-glycosylated. The N-terminus is blocked possibly by pyroglutamic acid.

It is found in the virion. The protein localises to the host endoplasmic reticulum lumen. In terms of biological role, calcium-binding protein that interacts with rotavirus cell receptors once the initial attachment by VP4 has been achieved. Rotavirus attachment and entry into the host cell probably involves multiple sequential contacts between the outer capsid proteins VP4 and VP7, and the cell receptors. Following entry into the host cell, low intracellular or intravesicular Ca(2+) concentration probably causes the calcium-stabilized VP7 trimers to dissociate from the virion. This step is probably necessary for the membrane-disrupting entry step and the release of VP4, which is locked onto the virion by VP7. This Rotavirus A (strain RVA/Human/Indonesia/69M/1980/G8P4[10]) (RV-A) protein is Outer capsid glycoprotein VP7.